We begin with the raw amino-acid sequence, 96 residues long: Protein Vpr (96 aa).

The interval 1–42 (MEQAPEDQGPQREPHNEWTLELLEELKNEAVRHFPRIWLHGL) is homooligomerization. Phosphoserine; by host is present on residues Ser79, Ser94, and Ser96.

Belongs to the HIV-1 VPR protein family. As to quaternary structure, homooligomer, may form homodimer. Interacts with p6-gag region of the Pr55 Gag precursor protein through a (Leu-X-X)4 motif near the C-terminus of the P6gag protein. Interacts with host UNG. May interact with host RAD23A/HHR23A. Interacts with host VPRBP/DCAF1, leading to hijack the CUL4A-RBX1-DDB1-DCAF1/VPRBP complex, mediating ubiquitination of host proteins such as TERT and ZGPAT and arrest of the cell cycle in G2 phase. Phosphorylated on several residues by host. These phosphorylations regulate VPR activity for the nuclear import of the HIV-1 pre-integration complex.

It is found in the virion. Its subcellular location is the host nucleus. It localises to the host extracellular space. Functionally, during virus entry, plays a role in the transport of the viral pre-integration (PIC) complex to the host nucleus. This function is crucial for viral infection of non-dividing macrophages. May act directly at the nuclear pore complex, by binding nucleoporins phenylalanine-glycine (FG)-repeat regions. Its function is as follows. During virus replication, may deplete host UNG protein, and incude G2-M cell cycle arrest. Acts by targeting specific host proteins for degradation by the 26S proteasome, through association with the cellular CUL4A-DDB1 E3 ligase complex by direct interaction with host VPRPB/DCAF-1. Cell cycle arrest reportedly occurs within hours of infection and is not blocked by antiviral agents, suggesting that it is initiated by the VPR carried into the virion. Additionally, VPR induces apoptosis in a cell cycle dependent manner suggesting that these two effects are mechanistically linked. Detected in the serum and cerebrospinal fluid of AIDS patient, VPR may also induce cell death to bystander cells. In Homo sapiens (Human), this protein is Protein Vpr.